Reading from the N-terminus, the 196-residue chain is MGRKKLEIKRIENKSSRQVTFSKRRNGLIEKARQLSVLCDASVALLVVSASGKLYSFSSGDNLVKILDRYGKQHADDLKALDHQSKALNYGSHYELLELVDSKLVGSNVKNVSIDALVQLEEHLETALSVTRAKKTELMLKLVENLKEKEKMLKEENQVLASQMENNHHVGAEAEMEMSPAGQISDNLPVTLPLLN.

Residues 1–61 (MGRKKLEIKR…GKLYSFSSGD (61 aa)) form the MADS-box domain. The Nuclear localization signal motif lies at 8-15 (IKRIENKS). One can recognise a K-box domain in the interval 80–170 (ALDHQSKALN…ASQMENNHHV (91 aa)).

In terms of tissue distribution, high expression in the vegetative apex and in root tissue and lower expression in leaves and stems. Not detected in young tissues of the inflorescence. Before fertilization, expressed in ovules, but not in pollen or stamens, of non-vernalized plants. After vernalization, not detected in ovules.

It is found in the nucleus. Putative transcription factor that seems to play a central role in the regulation of flowering time in the late-flowering phenotype by interacting with 'FRIGIDA', the autonomous and the vernalization flowering pathways. Inhibits flowering by repressing 'SUPPRESSOR OF OVEREXPRESSION OF CONSTANS 1'. At elevated temperatures (e.g. 29 degrees Celsius), maintained at high levels in a JMJ30/JMJ32-dependent manner to prevent extreme precocious flowering. The polypeptide is MADS-box protein FLOWERING LOCUS C (Arabidopsis thaliana (Mouse-ear cress)).